The chain runs to 288 residues: Energy-coupling factor transporter ATP-binding protein EcfA2 (288 aa).

One can recognise an ABC transporter domain in the interval 3 to 246 (IKLEQLGYCY…PDELVDLGLS (244 aa)). 40–47 (GHTGSGKS) lines the ATP pocket.

The protein belongs to the ABC transporter superfamily. Energy-coupling factor EcfA family. In terms of assembly, forms a stable energy-coupling factor (ECF) transporter complex composed of 2 membrane-embedded substrate-binding proteins (S component), 2 ATP-binding proteins (A component) and 2 transmembrane proteins (T component).

Its subcellular location is the cell membrane. In terms of biological role, ATP-binding (A) component of a common energy-coupling factor (ECF) ABC-transporter complex. Unlike classic ABC transporters this ECF transporter provides the energy necessary to transport a number of different substrates. This chain is Energy-coupling factor transporter ATP-binding protein EcfA2, found in Listeria monocytogenes serovar 1/2a (strain ATCC BAA-679 / EGD-e).